Consider the following 329-residue polypeptide: DNA-directed RNA polymerase subunit alpha (329 aa).

Residues methionine 1 to glutamate 231 are alpha N-terminal domain (alpha-NTD). The alpha C-terminal domain (alpha-CTD) stretch occupies residues phenylalanine 249–arginine 329.

The protein belongs to the RNA polymerase alpha chain family. As to quaternary structure, homodimer. The RNAP catalytic core consists of 2 alpha, 1 beta, 1 beta' and 1 omega subunit. When a sigma factor is associated with the core the holoenzyme is formed, which can initiate transcription.

It carries out the reaction RNA(n) + a ribonucleoside 5'-triphosphate = RNA(n+1) + diphosphate. Its function is as follows. DNA-dependent RNA polymerase catalyzes the transcription of DNA into RNA using the four ribonucleoside triphosphates as substrates. This chain is DNA-directed RNA polymerase subunit alpha, found in Albidiferax ferrireducens (strain ATCC BAA-621 / DSM 15236 / T118) (Rhodoferax ferrireducens).